We begin with the raw amino-acid sequence, 191 residues long: Large ribosomal subunit protein uL3 (191 aa).

Positions 119-138 (AAHGSRFHRRPGSIGNREWP) are disordered.

Belongs to the universal ribosomal protein uL3 family. In terms of assembly, part of the 50S ribosomal subunit. Forms a cluster with proteins L14 and L19.

In terms of biological role, one of the primary rRNA binding proteins, it binds directly near the 3'-end of the 23S rRNA, where it nucleates assembly of the 50S subunit. This Helicobacter pylori (strain ATCC 700392 / 26695) (Campylobacter pylori) protein is Large ribosomal subunit protein uL3 (rplC).